The chain runs to 74 residues: Mucroporin (74 aa).

The signal sequence occupies residues 1 to 22 (MKVKFLLAVFLIVLVVTDHCHA). The residue at position 39 (K39) is a Lysine amide. Residues 45–74 (QMEARFEPQNRNYRKRELDLEKLFANMPDY) constitute a propeptide that is removed on maturation.

Belongs to the non-disulfide-bridged peptide (NDBP) superfamily. Short antimicrobial peptide (group 4) family. Expressed by the venom gland.

It localises to the secreted. The protein localises to the target cell membrane. Its function is as follows. Mucroporin: cationic host defense peptide that have antibacterial activity by breaking membranes. Is more effective on Gram-positive than on Gram-negative bacteria. Minimum inhibitory concentrations (MIC) are the following: MIC=&gt;100 ug/ml against E.coli AB94012, MIC=&gt;100 ug/ml against P.aeruginosa AB93066, MIC=25 ug/ml against B.thuringiensis AB92037, MIC=50 ug/ml against B.subtilis AB91021, MIC=25 ug/ml against S.aureus AB94004, and MIC=25 ug/ml against the methicillin-resistant coagulase-negative Staphylococcus. Its synthetic analog mucroporin-M1 is more effective. Does not show antiviral activity against any of measles, SARS-CoV, influenza H5N1, hepatitis B and HIV-1 viruses. Mutant mucroporin-M1: can inhibit Gram-positive bacteria at low concentrations and antibiotic-resistant pathogens. Minimum inhibitory concentrations (MIC) are the following: MIC=12.5 ug/ml against E.coli AB94012, MIC=100 ug/ml against P.aeruginosa AB93066, MIC=25 ug/ml against B.thuringiensis AB92037, MIC=25 ug/ml against B.subtilis AB91021, MIC=5 ug/ml against S.aureus AB94004, and MIC=5 ug/ml against the methicillin-resistant coagulase-negative Staphylococcus. Also shows antiviral activities against measles (EC(50) of 7.15 ug/ml), SARS-CoV (EC(50) of 14.46 ug/ml), influenza H5N1 viruses (EC(50) of 2.10 mug/ml), HIV-1, and hepatitis B virus. In Lychas mucronatus (Chinese swimming scorpion), this protein is Mucroporin.